Consider the following 259-residue polypeptide: Succinate dehydrogenase iron-sulfur subunit (259 aa).

In terms of domain architecture, 2Fe-2S ferredoxin-type spans R28 to M119. [2Fe-2S] cluster-binding residues include C80, C85, and C100. Positions D160–Y190 constitute a 4Fe-4S ferredoxin-type domain. Residues C170, C173, and C176 each contribute to the [4Fe-4S] cluster site. C180 is a binding site for [3Fe-4S] cluster. Residue W185 coordinates a ubiquinone. [3Fe-4S] cluster-binding residues include C227 and C233. Residue C237 participates in [4Fe-4S] cluster binding.

The protein belongs to the succinate dehydrogenase/fumarate reductase iron-sulfur protein family. As to quaternary structure, part of an enzyme complex containing four subunits: a flavoprotein, an iron-sulfur, cytochrome b-556, and a hydrophobic anchor protein. Requires [2Fe-2S] cluster as cofactor. [3Fe-4S] cluster is required as a cofactor. It depends on [4Fe-4S] cluster as a cofactor.

The enzyme catalyses a quinone + succinate = fumarate + a quinol. It participates in carbohydrate metabolism; tricarboxylic acid cycle; fumarate from succinate (bacterial route): step 1/1. The protein is Succinate dehydrogenase iron-sulfur subunit (sdhB) of Paracoccus denitrificans.